The primary structure comprises 521 residues: Probable rhamnogalacturonase B (521 aa).

An N-terminal signal peptide occupies residues 1-21 (MRLHAFTLLSLLGLVPSFAAA). Cysteine 42 and cysteine 68 are disulfide-bonded. The N-linked (GlcNAc...) asparagine glycan is linked to asparagine 145. Aspartate 219 (proton donor) is an active-site residue. Cysteine 221 and cysteine 238 form a disulfide bridge. N-linked (GlcNAc...) asparagine glycosylation is present at asparagine 239. Histidine 294 is a catalytic residue. The N-linked (GlcNAc...) asparagine glycan is linked to asparagine 321. Disulfide bonds link cysteine 344–cysteine 350 and cysteine 372–cysteine 381. The tract at residues 462-521 (ETPAAASRSEQVVQGAPQETGQSAPESAGPVPSGNPGPVPTGGSRPSRHRHGHHHFGSAI) is disordered. Polar residues predominate over residues 469-486 (RSEQVVQGAPQETGQSAP). The segment covering 507–521 (PSRHRHGHHHFGSAI) has biased composition (basic residues).

Belongs to the glycosyl hydrolase 28 family.

The protein resides in the secreted. It catalyses the reaction Endohydrolysis of alpha-D-GalA-(1-&gt;2)-alpha-L-Rha glycosidic bond in the rhamnogalacturonan I backbone with initial inversion of anomeric configuration releasing oligosaccharides with beta-D-GalA at the reducing end.. In terms of biological role, pectinolytic enzymes consist of four classes of enzymes: pectine lyase, polygalacturonase, pectin methylesterase and rhamnogalacturonase. Hydrolyzes alpha-D-galacturonopyranosyl-(1,2)-alpha-L-rhamnopyranosyl linkages in the backbone of the hairy regions of pectins. The protein is Probable rhamnogalacturonase B (rhgB) of Aspergillus fumigatus (strain ATCC MYA-4609 / CBS 101355 / FGSC A1100 / Af293) (Neosartorya fumigata).